The following is a 194-amino-acid chain: Translation machinery-associated protein 22 (194 aa).

An SUI1 domain is found at 102–173 (VQIKRVERNK…DVQDWLLEVY (72 aa)).

Belongs to the DENR family. In terms of assembly, interacts with the 40S ribosomal subunit.

The protein resides in the cytoplasm. In Aspergillus oryzae (strain ATCC 42149 / RIB 40) (Yellow koji mold), this protein is Translation machinery-associated protein 22 (tma22).